A 391-amino-acid chain; its full sequence is Elongation factor Tu (391 aa).

The region spanning lysine 10–glutamate 201 is the tr-type G domain. Residues glycine 19–threonine 26 form a G1 region. Glycine 19 to threonine 26 contacts GTP. Threonine 26 is a Mg(2+) binding site. The tract at residues glycine 55–serine 59 is G2. A G3 region spans residues aspartate 76 to glycine 79. GTP-binding positions include aspartate 76–histidine 80 and asparagine 131–aspartate 134. Positions asparagine 131 to aspartate 134 are G4. Positions serine 169–leucine 171 are G5.

This sequence belongs to the TRAFAC class translation factor GTPase superfamily. Classic translation factor GTPase family. EF-Tu/EF-1A subfamily. Monomer.

Its subcellular location is the cytoplasm. It catalyses the reaction GTP + H2O = GDP + phosphate + H(+). In terms of biological role, GTP hydrolase that promotes the GTP-dependent binding of aminoacyl-tRNA to the A-site of ribosomes during protein biosynthesis. The sequence is that of Elongation factor Tu from Rhizobium johnstonii (strain DSM 114642 / LMG 32736 / 3841) (Rhizobium leguminosarum bv. viciae).